A 431-amino-acid polypeptide reads, in one-letter code: Mitochondrial distribution and morphology protein 12 (431 aa).

In terms of domain architecture, SMP-LTD spans 1–431 (MSIDLNWETL…VYPSFWTFLV (431 aa)). Disordered stretches follow at residues 68-153 (DFYE…GVST) and 209-289 (QSHT…PKPE). Residues 69-96 (FYEDLDDDDGGSDEDDEGSNSCQTDEEN) are compositionally biased toward acidic residues. Basic and acidic residues predominate over residues 97 to 113 (EAAKTLRERRKMDRVER). Residues 115 to 129 (ANGSSNVSNPPSYTD) are compositionally biased toward polar residues. The segment covering 241–252 (SASTLAVSSSTT) has biased composition (low complexity).

It belongs to the MDM12 family. In terms of assembly, component of the ER-mitochondria encounter structure (ERMES) or MDM complex, composed of mmm1, mdm10, mdm12 and mdm34. A mmm1 homodimer associates with one molecule of mdm12 on each side in a pairwise head-to-tail manner, and the SMP-LTD domains of mmm1 and mdm12 generate a continuous hydrophobic tunnel for phospholipid trafficking.

Its subcellular location is the mitochondrion outer membrane. It is found in the endoplasmic reticulum membrane. Functionally, component of the ERMES/MDM complex, which serves as a molecular tether to connect the endoplasmic reticulum (ER) and mitochondria. Components of this complex are involved in the control of mitochondrial shape and protein biogenesis, and function in nonvesicular lipid trafficking between the ER and mitochondria. Mdm12 is required for the interaction of the ER-resident membrane protein mmm1 and the outer mitochondrial membrane-resident beta-barrel protein mdm10. The mdm12-mmm1 subcomplex functions in the major beta-barrel assembly pathway that is responsible for biogenesis of all mitochondrial outer membrane beta-barrel proteins, and acts in a late step after the SAM complex. The mdm10-mdm12-mmm1 subcomplex further acts in the TOM40-specific pathway after the action of the mdm12-mmm1 complex. Essential for establishing and maintaining the structure of mitochondria and maintenance of mtDNA nucleoids. This Sclerotinia sclerotiorum (strain ATCC 18683 / 1980 / Ss-1) (White mold) protein is Mitochondrial distribution and morphology protein 12.